The sequence spans 366 residues: uncharacterized protein (366 aa).

Residues 64 to 289 enclose the OBG-type G domain; it reads GTVGFIGFPS…LKETMWDYLN (226 aa). GTP-binding positions include 70–77, 116–120, and 247–250; these read GFPSVGKS, DLPGI, and NKID. The region spanning 289–365 is the TGS domain; it reads NLVRVYTRPR…LDEDVVTIVK (77 aa).

It belongs to the TRAFAC class OBG-HflX-like GTPase superfamily. OBG GTPase family.

This is an uncharacterized protein from Schizosaccharomyces pombe (strain 972 / ATCC 24843) (Fission yeast).